A 439-amino-acid polypeptide reads, in one-letter code: Magnesium-dependent glutamate N-prenyltransferase (439 aa).

Mg(2+)-binding residues include N322, T326, E330, and F337.

Belongs to the terpene synthase family. It depends on Mg(2+) as a cofactor.

It catalyses the reaction dimethylallyl diphosphate + L-glutamate = prekainate + diphosphate. Its pathway is secondary metabolite biosynthesis. Its function is as follows. Magnesium-dependent glutamate N-prenyltransferase: part of the gene cluster that mediates the biosynthesis of kainic acid (KA) and derivatives, natural products with neurochemical activity acting as ionotropic glutamate receptor (iGluR) agonists, thus being neurotoxins. Catalyzes the conversion of L-glutamic acid (L-Glu) to prekainic acid in the presence of dimethylallyl diphosphate (DMAPP). Can also use geranyl diphosphate (GPP) as substrate, thus leading to the formation of N-geranyl-L-glutamic acid (L-NGG). The sequence is that of Magnesium-dependent glutamate N-prenyltransferase from Digenea simplex (Marine red alga).